We begin with the raw amino-acid sequence, 532 residues long: Intercellular adhesion molecule 1 (532 aa).

Positions 1–27 are cleaved as a signal peptide; that stretch reads MAPSGPQPALPILVVLLGALLLGPGNA. At 28-480 the chain is on the extracellular side; that stretch reads QTSVFPPEVI…TVNVLSPRYE (453 aa). Ig-like C2-type domains follow at residues 41 to 103 and 128 to 193; these read GGSV…QSSA and GKNL…LDLR. A glycan (N-linked (GlcNAc...) asparagine) is linked at asparagine 47. Disulfide bonds link cysteine 48/cysteine 92 and cysteine 52/cysteine 96. Residues asparagine 130 and asparagine 145 are each glycosylated (N-linked (GlcNAc...) asparagine). Cysteine 135 and cysteine 186 are disulfide-bonded. Positions 152–154 match the Cell attachment site; atypical motif; sequence RGE. Asparagine 183, asparagine 202, asparagine 267, asparagine 296, and asparagine 316 each carry an N-linked (GlcNAc...) asparagine glycan. An Ig-like C2-type 3 domain is found at 230 to 297; it reads DTQGTVVCSL…LLCGVMLGNQ (68 aa). Cysteine 237 and cysteine 290 form a disulfide bridge. The 54-residue stretch at 325-378 folds into the Ig-like C2-type 4 domain; sequence GTEVIVECEAHPRAKVMLNGVPAQPPGPRAQFLLKATPEDNGRSFSCSATLEVA. Residues cysteine 332 and cysteine 371 are joined by a disulfide bond. Residues asparagine 385 and asparagine 406 are each glycosylated (N-linked (GlcNAc...) asparagine). Cystine bridges form between cysteine 403/cysteine 419, cysteine 419/cysteine 457, and cysteine 431/cysteine 457. Positions 412-464 constitute an Ig-like C2-type 5 domain; the sequence is NSQQTPMCQAWGNPLPQLKCLKDGTFPLPIGQSVTVTRDLEGTYLCQARSTRG. Residues 481–503 traverse the membrane as a helical segment; the sequence is VVIIPVVAAAVILGTAGVATYLY. The Cytoplasmic portion of the chain corresponds to 504 to 532; sequence NRQRKIRKYRLQQAQNGTPMKPNTQATPP. The interval 513–532 is disordered; the sequence is RLQQAQNGTPMKPNTQATPP. Over residues 515–532 the composition is skewed to polar residues; that stretch reads QQAQNGTPMKPNTQATPP. Threonine 521 and threonine 530 each carry phosphothreonine.

Belongs to the immunoglobulin superfamily. ICAM family. Homodimer. Interacts with MUC1 and promotes cell aggregation in epithelial cells. Interacts with ARHGEF26/SGEF. Interacts (on T cell side) with CD81, CD247 and CD9 at immunological synapses between antigen-presenting cells and T cells. Monoubiquitinated, which is promoted by MARCH9 and leads to endocytosis.

The protein localises to the membrane. Its function is as follows. ICAM proteins are ligands for the leukocyte adhesion protein LFA-1 (integrin alpha-L/beta-2). During leukocyte trans-endothelial migration, ICAM1 engagement promotes the assembly of endothelial apical cups through ARHGEF26/SGEF and RHOG activation. The chain is Intercellular adhesion molecule 1 (ICAM1) from Macaca mulatta (Rhesus macaque).